The sequence spans 433 residues: Homogentisate 1,2-dioxygenase (433 aa).

His288 serves as the catalytic Proton acceptor. The Fe cation site is built by His331 and Glu337. Homogentisate is bound by residues Tyr346 and His367. His367 provides a ligand contact to Fe cation.

The protein belongs to the homogentisate dioxygenase family. Hexamer; dimer of trimers. Requires Fe cation as cofactor.

It carries out the reaction homogentisate + O2 = 4-maleylacetoacetate + H(+). The protein operates within amino-acid degradation; L-phenylalanine degradation; acetoacetate and fumarate from L-phenylalanine: step 4/6. Functionally, involved in the catabolism of homogentisate (2,5-dihydroxyphenylacetate or 2,5-OH-PhAc), a central intermediate in the degradation of phenylalanine and tyrosine. Catalyzes the oxidative ring cleavage of the ar omatic ring of 2,5-dihydroxyphenylacetate to yield maleylacetoacetate. This Pseudomonas putida (strain ATCC 47054 / DSM 6125 / CFBP 8728 / NCIMB 11950 / KT2440) protein is Homogentisate 1,2-dioxygenase.